A 131-amino-acid polypeptide reads, in one-letter code: MRESLFIIFFQFVCHSSNSLGVTLGSTFFRPVPLLTWTAPSIDLALSILALFFSCKCCCCWSSRRSRDLFFGKDSVVLLLLQLLSLENTFKWPAAVVDAAIPLLCFKLVSVSFNGDLIIIFVGETIFFFLF.

Residues 1 to 19 (MRESLFIIFFQFVCHSSNS) form the signal peptide. The next 2 membrane-spanning stretches (helical) occupy residues 33-53 (PLLTWTAPSIDLALSILALFF) and 111-131 (VSFNGDLIIIFVGETIFFFLF).

The protein localises to the membrane. This is an uncharacterized protein from Saccharomyces cerevisiae (strain ATCC 204508 / S288c) (Baker's yeast).